Reading from the N-terminus, the 475-residue chain is uncharacterized protein (475 aa).

The helical transmembrane segment at 7 to 28 threads the bilayer; the sequence is HVISIFETLGAYFINIFYNFLY. Residues N73, N83, and N195 are each glycosylated (N-linked (GlcNAc...) asparagine; by host). The stretch at 183 to 233 forms a coiled coil; sequence ELEETYARLSSYNRSLLHQIEELTSEKKSLLADLSTLRKKYEKRQSEYRRL. The segment covering 295–305 has biased composition (polar residues); sequence SQELTSKSPNN. The tract at residues 295-324 is disordered; it reads SQELTSKSPNNYPVPHSRTIVSKPPDNYPV. N-linked (GlcNAc...) asparagine; by host glycans are attached at residues N450 and N460.

This sequence belongs to the asfivirus B475L family.

It localises to the host membrane. This is an uncharacterized protein from Ornithodoros (relapsing fever ticks).